A 188-amino-acid chain; its full sequence is Large ribosomal subunit protein bL35m (188 aa).

The protein belongs to the bacterial ribosomal protein bL35 family.

The protein localises to the mitochondrion. The chain is Large ribosomal subunit protein bL35m (MRPL35) from Pongo abelii (Sumatran orangutan).